The sequence spans 434 residues: Urokinase-type plasminogen activator (434 aa).

The first 20 residues, 1 to 20 (MKLIIFLTVTLCTLVTGLDS), serve as a signal peptide directing secretion. Residues 36 to 72 (QHRECQCLNGGTCITYRFFSQIKRCLCPEGYGGLHCE) form the EGF-like domain. 12 disulfides stabilise this stretch: cysteine 40/cysteine 48, cysteine 42/cysteine 60, cysteine 62/cysteine 71, cysteine 79/cysteine 158, cysteine 96/cysteine 139, cysteine 128/cysteine 152, cysteine 162/cysteine 296, cysteine 202/cysteine 218, cysteine 210/cysteine 285, cysteine 310/cysteine 379, cysteine 342/cysteine 358, and cysteine 369/cysteine 397. The Kringle domain occupies 79 to 158 (CYSGNGEDYR…ETPCSTIEKC (80 aa)). The connecting peptide stretch occupies residues 159–172 (ERTCGQRSFSKYFK). The region spanning 173–421 (IVGGSQAEVE…YLNWIDSNMN (249 aa)) is the Peptidase S1 domain. The active-site Charge relay system is histidine 217. Asparagine 228 is a glycosylation site (N-linked (GlcNAc...) asparagine). Aspartate 272 (charge relay system) is an active-site residue. The active-site Charge relay system is the serine 373.

Belongs to the peptidase S1 family.

It localises to the secreted. The catalysed reaction is Specific cleavage of Arg-|-Val bond in plasminogen to form plasmin.. In terms of biological role, specifically cleaves the zymogen plasminogen to form the active enzyme plasmin. The protein is Urokinase-type plasminogen activator (PLAU) of Gallus gallus (Chicken).